Here is a 160-residue protein sequence, read N- to C-terminus: GPI-anchored protein LLG3 (160 aa).

The signal sequence occupies residues 1 to 23 (MKITHHCLVSLLSILLLSGFAFS). Asn56 carries N-linked (GlcNAc...) asparagine glycosylation. Ser137 carries the GPI-anchor amidated serine lipid modification. Positions 138 to 160 (HASIPLVSTHVLLITVSILFHLF) are cleaved as a propeptide — removed in mature form.

In terms of tissue distribution, expressed in pollen, pollen tubes, sporophytic pistil tissues, in the early stages of female gametophyte development, and in unfertilized, mature ovules.

The protein localises to the cell membrane. This is GPI-anchored protein LLG3 from Arabidopsis thaliana (Mouse-ear cress).